A 146-amino-acid polypeptide reads, in one-letter code: Hemoglobin subunit beta (146 aa).

N-acetylvaline is present on valine 1. Residues 2 to 146 enclose the Globin domain; that stretch reads HLTGEEKAAV…VANALAHKYH (145 aa). Threonine 12 carries the phosphothreonine modification. Position 44 is a phosphoserine (serine 44). Residue lysine 59 is modified to N6-acetyllysine. A heme b-binding site is contributed by histidine 63. Lysine 82 bears the N6-acetyllysine mark. A heme b-binding site is contributed by histidine 92. Cysteine 93 is modified (S-nitrosocysteine). Position 144 is an N6-acetyllysine (lysine 144).

The protein belongs to the globin family. As to quaternary structure, heterotetramer of two alpha chains and two beta chains. As to expression, red blood cells.

Its function is as follows. Involved in oxygen transport from the lung to the various peripheral tissues. The polypeptide is Hemoglobin subunit beta (HBB) (Martes foina (Beech marten)).